The chain runs to 116 residues: Protein TRACHEARY ELEMENT DIFFERENTIATION-RELATED 6 (116 aa).

Topologically, residues 1–24 are extracellular; it reads MASTDSVYRPTPTPDHDTTVVVVV. The chain crosses the membrane as a helical span at residues 25–45; that stretch reads FVSLGCVMFLAFLAFVIWFLI. Residues 46–116 lie on the Cytoplasmic side of the membrane; that stretch reads KKRSRKHRER…GVGSSVVSRS (71 aa).

In terms of assembly, interacts with CESA7/IRX3, a subunit of the secondary cell wall (SCW)-related cellulose synthase complex. In terms of tissue distribution, expressed preferentially in differentiating vessel elements in seedlings.

It is found in the cell membrane. It localises to the secreted. The protein localises to the cell wall. Involved in the secondary cell wall (SCW) formation of vessel elements (e.g. protoxylem and metaxylem), thus promoting tracheary element (TE) differentiation. In Arabidopsis thaliana (Mouse-ear cress), this protein is Protein TRACHEARY ELEMENT DIFFERENTIATION-RELATED 6.